The following is a 90-amino-acid chain: uncharacterized protein (90 aa).

Transmembrane regions (helical) follow at residues 17-37 (ILSM…IYLV) and 55-75 (ICFG…WGIA).

It localises to the membrane. This is an uncharacterized protein from Schizosaccharomyces pombe (strain 972 / ATCC 24843) (Fission yeast).